We begin with the raw amino-acid sequence, 195 residues long: Flavin-dependent monooxygenase, reductase subunit HsaB (195 aa).

Residues 42 to 46 (PVGFA), 48 to 49 (QS), 63 to 65 (CPT), 69 to 70 (RS), and 95 to 96 (RF) contribute to the FAD site. NAD(+) is bound at residue 160-163 (FYRG).

Belongs to the non-flavoprotein flavin reductase family. In terms of assembly, hsaAB monooxygenase consists of an oxygenase component HsaA and a reductase component HsaB.

The enzyme catalyses a reduced flavin + NAD(+) = an oxidized flavin + NADH + 2 H(+). Its pathway is lipid metabolism; steroid biosynthesis. Functionally, catalyzes the reduction of free flavins (FMN or FAD) by NADH. Subsequently, the reduced flavins diffuse to the HsaA oxygenase subunit. This is Flavin-dependent monooxygenase, reductase subunit HsaB (hsaB) from Rhodococcus jostii (strain RHA1).